The sequence spans 741 residues: Zinc transporter ZIP6 (741 aa).

An N-terminal signal peptide occupies residues 1–20 (MATNLSVIMILTFALWVTNP). Over 21 to 311 (LHELQSTAAF…PKTYSLQIAW (291 aa)) the chain is Extracellular. Asparagine 68 carries an N-linked (GlcNAc...) asparagine glycan. Residues 95–111 (HDHERHSDHERHSDHER) are compositionally biased toward basic and acidic residues. Disordered stretches follow at residues 95-172 (HDHE…EVTS) and 189-213 (ETPK…EKSR). Polar residues predominate over residues 135-147 (DNSGKNPNTSQGK). N-linked (GlcNAc...) asparagine glycosylation occurs at asparagine 142. Basic and acidic residues predominate over residues 150 to 162 (RPAEHVNGRRNGK). The segment covering 163 to 172 (ESASSSEVTS) has biased composition (low complexity). The span at 200-209 (INPSTPPSIT) shows a compositional bias: polar residues. N-linked (GlcNAc...) asparagine glycans are attached at residues asparagine 226, asparagine 251, and asparagine 268. Residues 312 to 332 (LGGFIAISIISFLSLLGVILV) form a helical membrane-spanning segment. The Cytoplasmic portion of the chain corresponds to 333–341 (PLMNRVFFK). A helical membrane pass occupies residues 342–362 (FLLSFLVALAVGTLSGDALLH). Over 363-409 (LLPHSHASHHHSHSHEEPAMEMKRGPLFSHLSAQNLEESSYFDSTWK) the chain is Extracellular. The chain crosses the membrane as a helical span at residues 410–430 (GLTALGGLYFMFLVEHVLTLI). Residues 431–643 (KQFKDKKKKN…LKAGMTVKQA (213 aa)) are Cytoplasmic-facing. Residues 434-494 (KDKKKKNQKK…QEPSPFDSQQ (61 aa)) form a disordered region. Residues 450 to 475 (VESKKQLSKYESQLSTNEEKVDTGER) are a coiled coil. 2 positions are modified to phosphoserine: serine 457 and serine 464. Basic and acidic residues predominate over residues 466-477 (NEEKVDTGERPE). The segment covering 481–494 (QADSQEPSPFDSQQ) has biased composition (polar residues). The chain crosses the membrane as a helical span at residues 644-664 (VLYNALSAMLAYLGMATGIFI). Over 665 to 672 (GHYAENVS) the chain is Extracellular. Asparagine 670 carries N-linked (GlcNAc...) asparagine glycosylation. The chain crosses the membrane as a helical span at residues 673-693 (MWIFALTAGLFMYVALVDMVP). At 694-710 (EMLHNDASDHGCSRWGY) the chain is on the cytoplasmic side. Residues 711–731 (FFLQNAGILLGFGIMLLISIF) traverse the membrane as a helical segment. Over 732–741 (EHKIVFRINF) the chain is Extracellular.

This sequence belongs to the ZIP transporter (TC 2.A.5) family. In terms of assembly, interacts with SLC39A10; which triggers cells to undergo EMT and mitosis. Found in a complex with SLC39A6, SLC39A10 and with the 'Ser-727' phosphorylated form of STAT3 throughout mitosis. Found in a complex with SLC39A6, SLC39A10 and with NCAM1; this complex controls NCAM1 phosphorylation and integration into focal adhesion complexes during epithelial-to-mesenchymal transition (EMT). Found in a complex with SLC39A6, SLC39A10 and with GSK3B that controls NCAM1 phosphorylation. In terms of processing, cleaved on the N-terminus before locating to the plasma membrane. Post-translationally, N-glycosylated. Phosphorylated by ZAP70 in response to TCR stimulation leading to its activation. Expressed in the endothelial cells of the brain capillaries.

Its subcellular location is the cell membrane. It localises to the cell projection. The protein resides in the lamellipodium membrane. It is found in the membrane raft. The protein localises to the apical cell membrane. It carries out the reaction Zn(2+)(in) = Zn(2+)(out). Its function is as follows. Zinc-influx transporter which plays a role in zinc homeostasis and in the induction of epithelial-to-mesenchymal transition (EMT). When associated with SLC39A10, the heterodimer formed by SLC39A10 and SLC39A6 mediates cellular zinc uptake to trigger cells to undergo epithelial- to-mesenchymal transition (EMT). The SLC39A10-SLC39A6 heterodimer also controls NCAM1 phosphorylation and its integration into focal adhesion complexes during EMT. Zinc influx inactivates GSK3B, enabling unphosphorylated SNAI1 in the nucleus to down-regulate adherence genes such as CDH1, causing loss of cell adherence. In addition, the SLC39A10-SLC39A6 heterodimer plays an essentiel role in initiating mitosis by importing zinc into cells to initiate a pathway resulting in the onset of mitosis. Participates in the T-cell receptor signaling regulation by mediating cellular zinc uptake into activated lymphocytes. Regulates the zinc influx necessary for proper meiotic progression to metaphase II (MII) that allows the oocyte-to-egg transition. The polypeptide is Zinc transporter ZIP6 (Rattus norvegicus (Rat)).